The sequence spans 599 residues: MGESLNGLKRTMMCGEPREEHVGKKITLMGWVQRNRKLGALEFVDLRDKTGIMQVVFGEEINAEAFEKAKGVRSEYCVAVTGEVVKRESVNENMPTGFVELKCENIKILSESETPPIYIKEDLDAAENIRLKYRYLDLRRSDMHKIFEIRSKTTKAIRDYLEENNFLDVETPILSKSSPEGARDYLVPSRNYPGMFYALPQSPQIFKQLLMVSGFDRYYQIAKCFRDEDLRANRQPEFTQVDMELSFVEQEDIMAVNEGLIAHVFKKVAGVDVQLPIKRMTFKDAMEKYGSDKPDLRFGMEITNITEDVKDLDFVVFKSAIEAGGSVRALCLKCGADLGRKPLDKLGEFVKTYKAKGLAWIQIKEDGVKSSIAKFLTDDVTNSIVKTMNAETGDAILIVADKNSVVFQSLGALRLELAKQFDLIKDKNEFNFTWITEFPLFEYSEEEERYKACHHPFTAPMDEDLDFIESDPGNVRSKAYDLVLNGEELGGGSIRIHDTALQERMFRALGLTDEVVNERFGYLLQAFKFGPPPHGGLAFGLDRMIMFLAGTENIKDVIAFPKNQNAYCYLSEAPNIVDEKQLTELGIAILPKEEKNDKE.

Residue glutamate 180 participates in L-aspartate binding. The interval 204-207 (QIFK) is aspartate. Arginine 226 contacts L-aspartate. ATP-binding positions include 226-228 (RDE) and glutamine 235. Histidine 454 provides a ligand contact to L-aspartate. Residue glutamate 488 participates in ATP binding. Arginine 495 provides a ligand contact to L-aspartate. 540 to 543 (GLDR) is an ATP binding site.

Belongs to the class-II aminoacyl-tRNA synthetase family. Type 1 subfamily. As to quaternary structure, homodimer.

It localises to the cytoplasm. The enzyme catalyses tRNA(Asp) + L-aspartate + ATP = L-aspartyl-tRNA(Asp) + AMP + diphosphate. Catalyzes the attachment of L-aspartate to tRNA(Asp) in a two-step reaction: L-aspartate is first activated by ATP to form Asp-AMP and then transferred to the acceptor end of tRNA(Asp). The sequence is that of Aspartate--tRNA ligase from Clostridium beijerinckii (strain ATCC 51743 / NCIMB 8052) (Clostridium acetobutylicum).